Consider the following 467-residue polypeptide: Citrate synthase, mitochondrial (467 aa).

Active-site residues include histidine 301 and histidine 347.

The protein belongs to the citrate synthase family.

It is found in the mitochondrion matrix. The enzyme catalyses oxaloacetate + acetyl-CoA + H2O = citrate + CoA + H(+). It participates in carbohydrate metabolism; tricarboxylic acid cycle; isocitrate from oxaloacetate: step 1/2. The chain is Citrate synthase, mitochondrial (CIT) from Candida tropicalis (Yeast).